Here is a 91-residue protein sequence, read N- to C-terminus: UPF0250 protein NGK_1021 (91 aa).

This sequence belongs to the UPF0250 family.

The sequence is that of UPF0250 protein NGK_1021 from Neisseria gonorrhoeae (strain NCCP11945).